The chain runs to 180 residues: Large ribosomal subunit protein uL6c (180 aa).

The protein belongs to the universal ribosomal protein uL6 family. As to quaternary structure, part of the 50S ribosomal subunit.

The protein localises to the plastid. It is found in the chloroplast. Its function is as follows. Binds 23S rRNA. In Porphyra purpurea (Red seaweed), this protein is Large ribosomal subunit protein uL6c (rpl6).